A 388-amino-acid polypeptide reads, in one-letter code: Succinate--CoA ligase [ADP-forming] subunit beta (388 aa).

The 236-residue stretch at K9–H244 folds into the ATP-grasp domain. Residues K46, G53–G55, E99, T102, and E107 contribute to the ATP site. Positions 199 and 213 each coordinate Mg(2+). Substrate-binding positions include N264 and G321–V323.

It belongs to the succinate/malate CoA ligase beta subunit family. As to quaternary structure, heterotetramer of two alpha and two beta subunits. It depends on Mg(2+) as a cofactor.

It catalyses the reaction succinate + ATP + CoA = succinyl-CoA + ADP + phosphate. The catalysed reaction is GTP + succinate + CoA = succinyl-CoA + GDP + phosphate. It participates in carbohydrate metabolism; tricarboxylic acid cycle; succinate from succinyl-CoA (ligase route): step 1/1. Functionally, succinyl-CoA synthetase functions in the citric acid cycle (TCA), coupling the hydrolysis of succinyl-CoA to the synthesis of either ATP or GTP and thus represents the only step of substrate-level phosphorylation in the TCA. The beta subunit provides nucleotide specificity of the enzyme and binds the substrate succinate, while the binding sites for coenzyme A and phosphate are found in the alpha subunit. This Pectobacterium carotovorum subsp. carotovorum (strain PC1) protein is Succinate--CoA ligase [ADP-forming] subunit beta.